We begin with the raw amino-acid sequence, 400 residues long: Elongation factor Tu (400 aa).

Residues 10–210 (KPHCNVGTIG…VDTYIPIPPR (201 aa)) form the tr-type G domain. Positions 19–26 (GHVDHGKT) are G1. 19 to 26 (GHVDHGKT) lines the GTP pocket. Thr-26 is a Mg(2+) binding site. The G2 stretch occupies residues 60–64 (GLTIA). The G3 stretch occupies residues 81–84 (DCPG). GTP contacts are provided by residues 81-85 (DCPGH) and 136-139 (NKCD). A G4 region spans residues 136–139 (NKCD). The interval 174–176 (SAI) is G5.

It belongs to the TRAFAC class translation factor GTPase superfamily. Classic translation factor GTPase family. EF-Tu/EF-1A subfamily. Monomer.

The protein resides in the cytoplasm. It catalyses the reaction GTP + H2O = GDP + phosphate + H(+). Its function is as follows. GTP hydrolase that promotes the GTP-dependent binding of aminoacyl-tRNA to the A-site of ribosomes during protein biosynthesis. The protein is Elongation factor Tu of Dehalococcoides mccartyi (strain CBDB1).